The primary structure comprises 295 residues: GTPase Era (295 aa).

Residues 7 to 176 (KTVSVCIIGR…ITSKAKIAPW (170 aa)) enclose the Era-type G domain. The tract at residues 15 to 22 (GRPNSGKS) is G1. 15 to 22 (GRPNSGKS) contacts GTP. Positions 41-45 (QTTRS) are G2. The tract at residues 62–65 (DTPG) is G3. Residues 62 to 66 (DTPGI) and 124 to 127 (NKID) contribute to the GTP site. Residues 124–127 (NKID) form a G4 region. The G5 stretch occupies residues 152–154 (ISA). One can recognise a KH type-2 domain in the interval 204–281 (LQQELPYKLT…HLFLFVKVRE (78 aa)).

It belongs to the TRAFAC class TrmE-Era-EngA-EngB-Septin-like GTPase superfamily. Era GTPase family. As to quaternary structure, monomer.

It is found in the cytoplasm. The protein localises to the cell inner membrane. Functionally, an essential GTPase that binds both GDP and GTP, with rapid nucleotide exchange. Plays a role in 16S rRNA processing and 30S ribosomal subunit biogenesis and possibly also in cell cycle regulation and energy metabolism. This chain is GTPase Era, found in Rickettsia bellii (strain OSU 85-389).